Reading from the N-terminus, the 104-residue chain is Urease subunit beta (104 aa).

This sequence belongs to the urease beta subunit family. Heterotrimer of UreA (gamma), UreB (beta) and UreC (alpha) subunits. Three heterotrimers associate to form the active enzyme.

Its subcellular location is the cytoplasm. The enzyme catalyses urea + 2 H2O + H(+) = hydrogencarbonate + 2 NH4(+). Its pathway is nitrogen metabolism; urea degradation; CO(2) and NH(3) from urea (urease route): step 1/1. The polypeptide is Urease subunit beta (Rhodococcus opacus (strain B4)).